The sequence spans 156 residues: S-ribosylhomocysteine lyase (156 aa).

Positions 54, 58, and 123 each coordinate Fe cation.

Belongs to the LuxS family. Homodimer. Requires Fe cation as cofactor.

It catalyses the reaction S-(5-deoxy-D-ribos-5-yl)-L-homocysteine = (S)-4,5-dihydroxypentane-2,3-dione + L-homocysteine. Functionally, involved in the synthesis of autoinducer 2 (AI-2) which is secreted by bacteria and is used to communicate both the cell density and the metabolic potential of the environment. The regulation of gene expression in response to changes in cell density is called quorum sensing. Catalyzes the transformation of S-ribosylhomocysteine (RHC) to homocysteine (HC) and 4,5-dihydroxy-2,3-pentadione (DPD). The protein is S-ribosylhomocysteine lyase of Ligilactobacillus salivarius (strain UCC118) (Lactobacillus salivarius).